A 683-amino-acid chain; its full sequence is Capsid polyprotein VP90 (683 aa).

Low complexity predominate over residues 1-13; sequence MAGGATAPAGAKP. Disordered stretches follow at residues 1–45 and 391–413; these read MAGG…KQEL and PNAE…QPPA. Over residues 14–39 the composition is skewed to basic residues; that stretch reads KQPKQKQKKPSSQARKKPSQKQKAMK. The segment covering 398-413 has biased composition (pro residues); the sequence is LPPPTTGAQPQPQPPA.

The protein belongs to the astroviridae capsid polyprotein family. Post-translationally, specific enzymatic cleavages by the host yield mature proteins.

The protein resides in the virion. Its function is as follows. Self-assembles to form an icosahedral T=3 immature capsid. This Gallus gallus (Chicken) protein is Capsid polyprotein VP90.